The sequence spans 597 residues: Aspartate--tRNA ligase (597 aa).

Glu-173 serves as a coordination point for L-aspartate. The interval 197 to 200 (QLFK) is aspartate. Arg-219 contacts L-aspartate. ATP contacts are provided by residues 219–221 (RDE) and Gln-228. His-449 is a binding site for L-aspartate. ATP is bound at residue Glu-483. Arg-490 serves as a coordination point for L-aspartate. 535 to 538 (GLDR) is a binding site for ATP.

Belongs to the class-II aminoacyl-tRNA synthetase family. Type 1 subfamily. As to quaternary structure, homodimer.

It localises to the cytoplasm. It catalyses the reaction tRNA(Asp) + L-aspartate + ATP = L-aspartyl-tRNA(Asp) + AMP + diphosphate. Functionally, catalyzes the attachment of L-aspartate to tRNA(Asp) in a two-step reaction: L-aspartate is first activated by ATP to form Asp-AMP and then transferred to the acceptor end of tRNA(Asp). This is Aspartate--tRNA ligase from Shewanella pealeana (strain ATCC 700345 / ANG-SQ1).